Reading from the N-terminus, the 644-residue chain is Protein ETHYLENE-INSENSITIVE 3-like 1b (644 aa).

Disordered stretches follow at residues 47 to 75 (QCVM…DDDV) and 97 to 131 (ELQL…KMSR). Residues 66–75 (AGEDDSDDDV) are compositionally biased toward acidic residues.

The protein belongs to the EIN3 family. As to expression, highly expressed in roots. Expressed at low levels in leaves and panicles.

The protein localises to the nucleus. Transcription factor acting as a positive regulator in the ethylene response pathway. Involved in wound signaling by binding specifically to the DNA sequence 5'-ATGTACCT-3' found in the promoter of some wound-inducible genes. Binds directly to the DNA sequence 5'-TGTTACAAATACC-3' in the promoter of the GA20OX2 gene to activate its expression at the transcriptional level during ethylene signaling. The polypeptide is Protein ETHYLENE-INSENSITIVE 3-like 1b (Oryza sativa subsp. japonica (Rice)).